The chain runs to 402 residues: CCA-adding enzyme (402 aa).

ATP-binding residues include Gly-32 and Arg-35. Residues Gly-32 and Arg-35 each coordinate CTP. Asp-45 and Asp-47 together coordinate Mg(2+). The ATP site is built by Arg-116, Asp-159, Arg-162, Arg-165, and Arg-168. The CTP site is built by Arg-116, Asp-159, Arg-162, Arg-165, and Arg-168.

The protein belongs to the tRNA nucleotidyltransferase/poly(A) polymerase family. Bacterial CCA-adding enzyme type 3 subfamily. As to quaternary structure, homodimer. The cofactor is Mg(2+).

It carries out the reaction a tRNA precursor + 2 CTP + ATP = a tRNA with a 3' CCA end + 3 diphosphate. It catalyses the reaction a tRNA with a 3' CCA end + 2 CTP + ATP = a tRNA with a 3' CCACCA end + 3 diphosphate. Its function is as follows. Catalyzes the addition and repair of the essential 3'-terminal CCA sequence in tRNAs without using a nucleic acid template. Adds these three nucleotides in the order of C, C, and A to the tRNA nucleotide-73, using CTP and ATP as substrates and producing inorganic pyrophosphate. tRNA 3'-terminal CCA addition is required both for tRNA processing and repair. Also involved in tRNA surveillance by mediating tandem CCA addition to generate a CCACCA at the 3' terminus of unstable tRNAs. While stable tRNAs receive only 3'-terminal CCA, unstable tRNAs are marked with CCACCA and rapidly degraded. The polypeptide is CCA-adding enzyme (Streptococcus pyogenes serotype M4 (strain MGAS10750)).